The chain runs to 332 residues: Thiamine thiazole synthase (332 aa).

Substrate contacts are provided by residues C87, 108–109, G116, and V184; that span reads EA. C221 is modified (2,3-didehydroalanine (Cys)). Substrate contacts are provided by residues D223, H238, M290, and 300–302; that span reads RMG.

The protein belongs to the THI4 family. Homooctamer. Fe cation is required as a cofactor. Post-translationally, during the catalytic reaction, a sulfide is transferred from Cys-221 to a reaction intermediate, generating a dehydroalanine residue.

Its subcellular location is the cytoplasm. It localises to the nucleus. The catalysed reaction is [ADP-thiazole synthase]-L-cysteine + glycine + NAD(+) = [ADP-thiazole synthase]-dehydroalanine + ADP-5-ethyl-4-methylthiazole-2-carboxylate + nicotinamide + 3 H2O + 2 H(+). Functionally, involved in biosynthesis of the thiamine precursor thiazole. Catalyzes the conversion of NAD and glycine to adenosine diphosphate 5-(2-hydroxyethyl)-4-methylthiazole-2-carboxylic acid (ADT), an adenylated thiazole intermediate. The reaction includes an iron-dependent sulfide transfer from a conserved cysteine residue of the protein to a thiazole intermediate. The enzyme can only undergo a single turnover, which suggests it is a suicide enzyme. May have additional roles in adaptation to various stress conditions and in DNA damage tolerance. The chain is Thiamine thiazole synthase from Aspergillus fumigatus (strain ATCC MYA-4609 / CBS 101355 / FGSC A1100 / Af293) (Neosartorya fumigata).